The primary structure comprises 75 residues: Metallothionein-like protein 1 (75 aa).

It belongs to the metallothionein superfamily. Type 15 family.

In terms of biological role, metallothioneins have a high content of cysteine residues that bind various heavy metals. The polypeptide is Metallothionein-like protein 1 (Cicer arietinum (Chickpea)).